The following is a 432-amino-acid chain: MRLPGWLWLSSAVLAACRAVEEHNLTEGLEDASAQAACPARLEGSGRCEGSQCPFQLTLPTLTIQLPRQLGSMEEVLKEVRTLKEAVDSLKKSCQDCKLQADDHRDPGGNGGNGAETAEDSRVQELESQVNKLSSELKNAKDQIQGLQGRLETLHLVNMNNIENYVDNKVANLTVVVNSLDGKCSKCPSQEHMQSQPVQHLIYKDCSDHYVLGRRSSGAYRVTPDHRNSSFEVYCDMETMGGGWTVLQARLDGSTNFTREWKDYKAGFGNLEREFWLGNDKIHLLTKSKEMILRIDLEDFNGLTLYALYDQFYVANEFLKYRLHIGNYNGTAGDALRFSRHYNHDLRFFTTPDRDNDRYPSGNCGLYYSSGWWFDSCLSANLNGKYYHQKYKGVRNGIFWGTWPGINQAQPGGYKSSFKQAKMMIRPKNFKP.

The signal sequence occupies residues methionine 1–alanine 19. N-linked (GlcNAc...) asparagine glycosylation is present at asparagine 24. Residues glycine 71 to valine 157 adopt a coiled-coil conformation. The interval glutamine 100–arginine 122 is disordered. Asparagine 172, asparagine 228, asparagine 256, and asparagine 329 each carry an N-linked (GlcNAc...) asparagine glycan. In terms of domain architecture, Fibrinogen C-terminal spans proline 197–asparagine 429. An intrachain disulfide couples cysteine 206 to cysteine 235. Cysteine 364 and cysteine 377 form a disulfide bridge.

As to quaternary structure, homotetramer; disulfide-linked. In terms of tissue distribution, constitutively expressed in cytotoxic T-cells.

The protein localises to the secreted. Its function is as follows. Converts prothrombin to thrombin. The protein is Fibroleukin (Fgl2) of Mus musculus (Mouse).